Consider the following 87-residue polypeptide: Insertion element IS407 uncharacterized 10.0 kDa protein (87 aa).

It belongs to the transposase 8 family.

The polypeptide is Insertion element IS407 uncharacterized 10.0 kDa protein (Burkholderia multivorans (strain ATCC 17616 / 249)).